Reading from the N-terminus, the 804-residue chain is Leucine--tRNA ligase (804 aa).

Residues 40 to 51 carry the 'HIGH' region motif; that stretch reads PYPSGAGLHVGH. Residues 576–580 carry the 'KMSKS' region motif; that stretch reads KMSKS. Lysine 579 is an ATP binding site.

This sequence belongs to the class-I aminoacyl-tRNA synthetase family.

The protein resides in the cytoplasm. The catalysed reaction is tRNA(Leu) + L-leucine + ATP = L-leucyl-tRNA(Leu) + AMP + diphosphate. This Staphylococcus aureus (strain MRSA252) protein is Leucine--tRNA ligase.